We begin with the raw amino-acid sequence, 149 residues long: Transcriptional regulator MraZ (149 aa).

2 SpoVT-AbrB domains span residues 5–52 and 81–124; these read ITTL…PLPE and AEEC…DSMV.

Belongs to the MraZ family. In terms of assembly, forms oligomers.

It localises to the cytoplasm. The protein localises to the nucleoid. This Nitrosococcus oceani (strain ATCC 19707 / BCRC 17464 / JCM 30415 / NCIMB 11848 / C-107) protein is Transcriptional regulator MraZ.